We begin with the raw amino-acid sequence, 186 residues long: dCTP deaminase (186 aa).

107-112 (KSTYAR) lines the dCTP pocket. The active-site Proton donor/acceptor is Glu133. DCTP-binding residues include Gln152, Tyr166, and Gln176.

The protein belongs to the dCTP deaminase family. In terms of assembly, homotrimer.

The enzyme catalyses dCTP + H2O + H(+) = dUTP + NH4(+). It participates in pyrimidine metabolism; dUMP biosynthesis; dUMP from dCTP (dUTP route): step 1/2. Catalyzes the deamination of dCTP to dUTP. This Campylobacter jejuni subsp. jejuni serotype O:2 (strain ATCC 700819 / NCTC 11168) protein is dCTP deaminase.